The sequence spans 488 residues: Glycogen synthase (488 aa).

Lys-17 contributes to the ADP-alpha-D-glucose binding site.

The protein belongs to the glycosyltransferase 1 family. Bacterial/plant glycogen synthase subfamily.

It catalyses the reaction [(1-&gt;4)-alpha-D-glucosyl](n) + ADP-alpha-D-glucose = [(1-&gt;4)-alpha-D-glucosyl](n+1) + ADP + H(+). The protein operates within glycan biosynthesis; glycogen biosynthesis. In terms of biological role, synthesizes alpha-1,4-glucan chains using ADP-glucose. The sequence is that of Glycogen synthase from Nitratidesulfovibrio vulgaris (strain DSM 19637 / Miyazaki F) (Desulfovibrio vulgaris).